Reading from the N-terminus, the 137-residue chain is Small ribosomal subunit protein uS9c (137 aa).

The protein belongs to the universal ribosomal protein uS9 family.

The protein resides in the plastid. Its subcellular location is the chloroplast. This chain is Small ribosomal subunit protein uS9c (rps9), found in Gracilaria tenuistipitata var. liui (Red alga).